The following is a 200-amino-acid chain: Phosphatidylethanolamine N-methyltransferase B (200 aa).

At 1-8 the chain is on the lumenal side; the sequence is MEKGLSSD. Residues 9-29 constitute an intramembrane region (helical); sequence LIIAFVAIVLHVVNYNVTAQF. Topologically, residues 30 to 39 are lumenal; sequence EYKTRYFTKL. Residues 40-58 traverse the membrane as a helical segment; the sequence is IGRNAIYYYAVFLIISALI. The Cytoplasmic portion of the chain corresponds to 59–86; the sequence is RDHFINVAVLSDKDSIILFPTEIANMIG. A helical membrane pass occupies residues 87–107; the sequence is DSCFIFGILLNIWTLKALGIK. An S-adenosyl-L-methionine-binding site is contributed by 91-93; that stretch reads IFG. Residues 108-150 are Lumenal-facing; that stretch reads GMYNGDSFGHIMDSPVTGGPYQFFSDPQYVGTTIAALGVAIRN. A helical membrane pass occupies residues 151-171; that stretch reads QSIYGFLCTILVGVVFYISAT. At 172–200 the chain is on the cytoplasmic side; sequence FVETPHLKNIYSNRSYSKINFKNLKSLKN. 174–175 is an S-adenosyl-L-methionine binding site; sequence ET.

This sequence belongs to the class VI-like SAM-binding methyltransferase superfamily. PEMT/PEM2 methyltransferase family.

The protein localises to the endoplasmic reticulum membrane. It is found in the mitochondrion membrane. It carries out the reaction a 1,2-diacyl-sn-glycero-3-phospho-N-methylethanolamine + S-adenosyl-L-methionine = a 1,2-diacyl-sn-glycero-3-phospho-N,N-dimethylethanolamine + S-adenosyl-L-homocysteine + H(+). It catalyses the reaction a 1,2-diacyl-sn-glycero-3-phospho-N,N-dimethylethanolamine + S-adenosyl-L-methionine = a 1,2-diacyl-sn-glycero-3-phosphocholine + S-adenosyl-L-homocysteine + H(+). The catalysed reaction is a 1,2-diacyl-sn-glycero-3-phosphoethanolamine + S-adenosyl-L-methionine = a 1,2-diacyl-sn-glycero-3-phospho-N-methylethanolamine + S-adenosyl-L-homocysteine + H(+). It participates in phospholipid metabolism; phosphatidylcholine biosynthesis. In terms of biological role, catalyzes the three sequential steps of the methylation pathway of phosphatidylcholine biosynthesis, the SAM-dependent methylation of phosphatidylethanolamine (PE) to phosphatidylmonomethylethanolamine (PMME), PMME to phosphatidyldimethylethanolamine (PDME), and PDME to phosphatidylcholine (PC). This Dictyostelium discoideum (Social amoeba) protein is Phosphatidylethanolamine N-methyltransferase B (pemtB).